The sequence spans 305 residues: Tyrosine recombinase XerC (305 aa).

In terms of domain architecture, Core-binding (CB) spans 4–95 (TSIQALINKW…AVKNFYRFLE (92 aa)). Residues 116–298 (LLPKALSEDD…SIKHLEAVYT (183 aa)) enclose the Tyr recombinase domain. Residues Arg159, Lys182, His250, Arg253, and His276 contribute to the active site. Tyr285 serves as the catalytic O-(3'-phospho-DNA)-tyrosine intermediate.

The protein belongs to the 'phage' integrase family. XerC subfamily. Forms a cyclic heterotetrameric complex composed of two molecules of XerC and two molecules of XerD.

Its subcellular location is the cytoplasm. Functionally, site-specific tyrosine recombinase, which acts by catalyzing the cutting and rejoining of the recombining DNA molecules. The XerC-XerD complex is essential to convert dimers of the bacterial chromosome into monomers to permit their segregation at cell division. It also contributes to the segregational stability of plasmids. In Rickettsia peacockii (strain Rustic), this protein is Tyrosine recombinase XerC.